Consider the following 309-residue polypeptide: Aurora kinase C (309 aa).

A disordered region spans residues 1–33 (MSSPRAVVQLGKAQPAGEELATANQTAQQPSSP). Residues 22–32 (TANQTAQQPSS) show a composition bias toward polar residues. The 251-residue stretch at 43-293 (FEIGRPLGKG…LAQILKHPWV (251 aa)) folds into the Protein kinase domain. Residues 49-57 (LGKGKFGNV) and Lys72 contribute to the ATP site. Asp166 serves as the catalytic Proton acceptor. Thr198 carries the post-translational modification Phosphothreonine; by PKA. The interval 292–309 (WVQAHSRRVLPPCAQMAS) is interaction with BIRC5.

It belongs to the protein kinase superfamily. Ser/Thr protein kinase family. Aurora subfamily. As to quaternary structure, component of the chromosomal passenger complex (CPC) composed of at least BIRC5/survivin, CDCA8/borealin, INCENP, AURKB or AURKC; predominantly independent AURKB- and AURKC-containing complexes exist; in the complex interacts directly with BIRC5/survivin and INCENP. Interacts with TACC1. Isoform 1 and isoform 2 are expressed in testis. Elevated expression levels were seen only in a subset of cancer cell lines such as Hep-G2, Huh-7 and HeLa. Expression is maximum at M phase.

It localises to the nucleus. It is found in the chromosome. The protein localises to the centromere. Its subcellular location is the cytoplasm. The protein resides in the cytoskeleton. It localises to the spindle. It carries out the reaction L-seryl-[protein] + ATP = O-phospho-L-seryl-[protein] + ADP + H(+). It catalyses the reaction L-threonyl-[protein] + ATP = O-phospho-L-threonyl-[protein] + ADP + H(+). With respect to regulation, okadaic acid, an inhibitor of protein phosphatase 1 (PP1), protein phosphatase 2A (PP2A) and protein phosphatase 5 (PP5), increases AURKC activity. AURKC is also stabilized through its interaction with INCENP, which also acts as an activator. Its function is as follows. Serine/threonine-protein kinase component of the chromosomal passenger complex (CPC), a complex that acts as a key regulator of mitosis. The CPC complex has essential functions at the centromere in ensuring correct chromosome alignment and segregation and is required for chromatin-induced microtubule stabilization and spindle assembly. Also plays a role in meiosis and more particularly in spermatogenesis. Has redundant cellular functions with AURKB and can rescue an AURKB knockdown. Like AURKB, AURKC phosphorylates histone H3 at 'Ser-10' and 'Ser-28'. AURKC phosphorylates the CPC complex subunits BIRC5/survivin and INCENP leading to increased AURKC activity. Phosphorylates TACC1, another protein involved in cell division, at 'Ser-228'. The sequence is that of Aurora kinase C (AURKC) from Homo sapiens (Human).